A 158-amino-acid polypeptide reads, in one-letter code: Large ribosomal subunit protein uL16 (158 aa).

This sequence belongs to the universal ribosomal protein uL16 family. In terms of assembly, part of the 50S ribosomal subunit.

In terms of biological role, binds 23S rRNA and is also seen to make contacts with the A and possibly P site tRNAs. This Prochlorococcus marinus (strain MIT 9313) protein is Large ribosomal subunit protein uL16.